Reading from the N-terminus, the 1715-residue chain is Sodium channel protein type 4 subunit alpha B (1715 aa).

Over 1 to 126 (MGTLLPPVGS…IFAIKILVHS (126 aa)) the chain is Cytoplasmic. Residues 108 to 431 (LLSPFNSMRI…VVAMAYAEQN (324 aa)) form an I repeat. A helical transmembrane segment spans residues 127–145 (LFSLFIMATILTNCVFMTL). The Extracellular segment spans residues 146–152 (SDPPAWS). Residues 153–173 (KTVEYVFTFIYTFEATIKVVS) traverse the membrane as a helical segment. At 174 to 187 (RGFCVGQFTFLKDP) the chain is on the cytoplasmic side. The helical transmembrane segment at 188–205 (WNWLDFMVISMAYLTELV) threads the bilayer. At 206 to 211 (DLGNVS) the chain is on the extracellular side. The N-linked (GlcNAc...) asparagine glycan is linked to Asn-209. The helical transmembrane segment at 212-228 (VLRTFRVLRALKTITVI) threads the bilayer. Residues 229–247 (PGLKTIVGALIQSVKKLAD) lie on the Cytoplasmic side of the membrane. Residues 248–267 (AMVLTVFCLSVFALIGLQLF) traverse the membrane as a helical segment. Residues 268-368 (MGNLRQKCVL…PNYGYTSYDS (101 aa)) are Extracellular-facing. A disulfide bridge links Cys-275 with Cys-337. 3 N-linked (GlcNAc...) asparagine glycosylation sites follow: Asn-284, Asn-304, and Asn-339. A disulfide bridge links Cys-346 with Cys-352. The segment at residues 369–393 (FGWAFLALFRLMTQDFWENLFQLTL) is an intramembrane region (pore-forming). Residues 394–400 (RAAGKTY) lie on the Extracellular side of the membrane. A helical membrane pass occupies residues 401 to 421 (MIFFVVVIFLGSFYLINLILA). At 422–515 (VVAMAYAEQN…RCLSAIVMDP (94 aa)) the chain is on the cytoplasmic side. The stretch at 497–768 (CCSCWRHLKR…QIAVNRIKRA (272 aa)) is one II repeat. A helical transmembrane segment spans residues 516-534 (FVDLGITICIILNTIFMAM). Over 535–545 (EHYPMSADFEE) the chain is Extracellular. Residues 546-565 (LLSVGNLVFTGIFTCEMVLK) form a helical membrane-spanning segment. At 566-579 (ILAMDPYFYFQVGW) the chain is on the cytoplasmic side. The chain crosses the membrane as a helical span at residues 580–599 (NIFDSIIVTMSLVELGLANV). Topologically, residues 600-601 (QG) are extracellular. A helical membrane pass occupies residues 602–619 (LSVLRSFRLMRVFKLAKS). Residues 620 to 635 (WPTLNMLIKIIGNSVG) are Cytoplasmic-facing. The helical transmembrane segment at 636-654 (ALGNLTLVLAIIVFIFAVV) threads the bilayer. The Extracellular portion of the chain corresponds to 655 to 683 (GMQLFGKNYKDCVCRISEDCKLPRWHMND). Cys-668 and Cys-674 are oxidised to a cystine. The pore-forming intramembrane region spans 684–704 (FFHAFLIIFRVLCGEWIDTMW). The Extracellular portion of the chain corresponds to 705–715 (DCMEVSGQTMC). Cys-706 and Cys-715 are oxidised to a cystine. The helical transmembrane segment at 716–734 (LIVYMMVLVIGNLVVLNLF) threads the bilayer. The Cytoplasmic segment spans residues 735 to 915 (LALLLSSFSG…ACFIIVENNY (181 aa)). The disordered stretch occupies residues 824 to 865 (EAESDSEDSDDDDVDEDKHSRCDESSFCSTVQDPEVKENEAD). Over residues 825–838 (AESDSEDSDDDDVD) the composition is skewed to acidic residues. Residues 896–1211 (KGKVWCNIRR…KKYYNAMKKL (316 aa)) form an III repeat. The chain crosses the membrane as a helical span at residues 916 to 933 (FESFIVFMILLSSGALAF). Topologically, residues 934–946 (EDIYLEKHQLIKT) are extracellular. Residues 947–965 (ILEYADKVFTYVFVVEMVL) form a helical membrane-spanning segment. Topologically, residues 966–979 (KWFAYGFKSYFSNA) are cytoplasmic. The helical transmembrane segment at 980-998 (WCWLDFLIVDVSLVSLTAN) threads the bilayer. Topologically, residues 999–1006 (ILGYSELG) are extracellular. Residues 1007–1025 (AIKSLRTLRALRPLRALSR) traverse the membrane as a helical segment. At 1026–1042 (FEGMRVVVNALVGAVPS) the chain is on the cytoplasmic side. A helical membrane pass occupies residues 1043–1062 (IFNVLLVCLIFWLIFSIMGV). The Extracellular portion of the chain corresponds to 1063-1115 (NLFAGKFSYCFNETSQEQFDKKIVNNKTECIALIEANFTEVRWKNLKVNYDNV). Cysteines 1072 and 1092 form a disulfide. N-linked (GlcNAc...) asparagine glycans are attached at residues Asn-1074 and Asn-1088. Positions 1116-1137 (GIGYLSLLQVATFKGWMEIMYA) form an intramembrane region, pore-forming. Over 1138 to 1154 (AVDSRDVESQPIYEVNI) the chain is Extracellular. Residues 1155–1176 (YMYLYFVIFIIFGSFFTLNLFI) form a helical membrane-spanning segment. Residues 1177 to 1239 (GVIIDNFNQQ…LVFDLVTKQI (63 aa)) are Cytoplasmic-facing. Positions 1195 to 1197 (IFM) are important for rapid channel inactivation. Residues 1220 to 1517 (VPRPENALQG…WEKFDPDATQ (298 aa)) form an IV repeat. The helical transmembrane segment at 1240–1257 (FDVFIMVLICLNMVTMMV) threads the bilayer. Over 1258 to 1268 (ETDEQTKEKED) the chain is Extracellular. A helical transmembrane segment spans residues 1269–1287 (ILYWINVIFIVIFTTECIL). Over 1288–1299 (KTIALRRHYFSI) the chain is Cytoplasmic. A helical membrane pass occupies residues 1300–1317 (GWNVFDFVVVILSILGLL). Residues 1318–1330 (LADIIEKYFVSPT) are Extracellular-facing. A helical membrane pass occupies residues 1331–1347 (LFRVIRLARIGRVLRLI). The Cytoplasmic portion of the chain corresponds to 1348–1366 (RGAKGIRTLLFALMMSLPA). Residues 1367-1384 (LFNIGLLLFLIMFIFSIF) traverse the membrane as a helical segment. Residues 1385–1406 (GMSNFAYVKKEAMIDDMFNFET) are Extracellular-facing. Residues 1407 to 1429 (FGNSMICLFMITTSAGWDGLLSP) constitute an intramembrane region (pore-forming). Residues 1430–1458 (IMNKPPDCDPDLENPGTTVRGNCGSPAIG) are Extracellular-facing. Cysteines 1437 and 1452 form a disulfide. The chain crosses the membrane as a helical span at residues 1459-1481 (IVFFSTYIIMSFLVVVNMYIAII). The Cytoplasmic portion of the chain corresponds to 1482-1715 (LENFNVATEE…LGTSERESLV (234 aa)). The IQ domain maps to 1611–1640 (EEVAARVIQRAYRKYLLQRTVRLASFTYRE).

Belongs to the sodium channel (TC 1.A.1.10) family. Nav1.4/SCN4A subfamily. In terms of assembly, voltage-gated sodium (Nav) channels consist of an ion-conducting alpha subunit which is functional on its own associated with regulatory beta subunits.

Its subcellular location is the cell membrane. The catalysed reaction is Na(+)(in) = Na(+)(out). Functionally, pore-forming subunit of a voltage-gated sodium (Nav) channel that directly mediates the depolarizing phase of action potentials in excitable membranes. Navs, also called VGSCs (voltage-gated sodium channels) or VDSCs (voltage-dependent sodium channels), operate by switching between closed and open conformations depending on the voltage difference across the membrane. In the open conformation they allow Na(+) ions to selectively pass through the pore, along their electrochemical gradient. The influx of Na+ ions provokes membrane depolarization, initiating the propagation of electrical signals throughout cells and tissues. This chain is Sodium channel protein type 4 subunit alpha B (scn4ab), found in Tetraodon nigroviridis (Spotted green pufferfish).